The sequence spans 282 residues: NADPH-dependent 7-cyano-7-deazaguanine reductase (282 aa).

Position 88–90 (88–90 (IES)) interacts with substrate. An NADPH-binding site is contributed by 90 to 91 (SK). Catalysis depends on Cys-190, which acts as the Thioimide intermediate. The Proton donor role is filled by Asp-197. Substrate is bound at residue 229–230 (HE). An NADPH-binding site is contributed by 258–259 (RG).

This sequence belongs to the GTP cyclohydrolase I family. QueF type 2 subfamily. Homodimer.

It is found in the cytoplasm. The catalysed reaction is 7-aminomethyl-7-carbaguanine + 2 NADP(+) = 7-cyano-7-deazaguanine + 2 NADPH + 3 H(+). It functions in the pathway tRNA modification; tRNA-queuosine biosynthesis. Its function is as follows. Catalyzes the NADPH-dependent reduction of 7-cyano-7-deazaguanine (preQ0) to 7-aminomethyl-7-deazaguanine (preQ1). In Salmonella arizonae (strain ATCC BAA-731 / CDC346-86 / RSK2980), this protein is NADPH-dependent 7-cyano-7-deazaguanine reductase.